Here is a 171-residue protein sequence, read N- to C-terminus: Nicotinamide-nucleotide adenylyltransferase (171 aa).

The protein belongs to the archaeal NMN adenylyltransferase family.

Its subcellular location is the cytoplasm. The enzyme catalyses beta-nicotinamide D-ribonucleotide + ATP + H(+) = diphosphate + NAD(+). It participates in cofactor biosynthesis; NAD(+) biosynthesis; NAD(+) from nicotinamide D-ribonucleotide: step 1/1. This Methanococcus maripaludis (strain C5 / ATCC BAA-1333) protein is Nicotinamide-nucleotide adenylyltransferase.